Here is a 160-residue protein sequence, read N- to C-terminus: Transcription elongation factor GreA (160 aa).

A coiled-coil region spans residues Ser49–Ile77.

This sequence belongs to the GreA/GreB family.

Functionally, necessary for efficient RNA polymerase transcription elongation past template-encoded arresting sites. The arresting sites in DNA have the property of trapping a certain fraction of elongating RNA polymerases that pass through, resulting in locked ternary complexes. Cleavage of the nascent transcript by cleavage factors such as GreA or GreB allows the resumption of elongation from the new 3'terminus. GreA releases sequences of 2 to 3 nucleotides. The sequence is that of Transcription elongation factor GreA from Leuconostoc mesenteroides subsp. mesenteroides (strain ATCC 8293 / DSM 20343 / BCRC 11652 / CCM 1803 / JCM 6124 / NCDO 523 / NBRC 100496 / NCIMB 8023 / NCTC 12954 / NRRL B-1118 / 37Y).